The sequence spans 282 residues: Formamidopyrimidine-DNA glycosylase (282 aa).

Pro2 serves as the catalytic Schiff-base intermediate with DNA. The active-site Proton donor is the Glu3. Residue Lys60 is the Proton donor; for beta-elimination activity of the active site. His99, Arg118, and Lys163 together coordinate DNA. The segment at 248 to 282 (LVYRRSGKNCKKCGEKILREKICGRSTHWCPNCQK) adopts an FPG-type zinc-finger fold. Arg272 (proton donor; for delta-elimination activity) is an active-site residue.

It belongs to the FPG family. As to quaternary structure, monomer. Zn(2+) serves as cofactor.

It carries out the reaction Hydrolysis of DNA containing ring-opened 7-methylguanine residues, releasing 2,6-diamino-4-hydroxy-5-(N-methyl)formamidopyrimidine.. The catalysed reaction is 2'-deoxyribonucleotide-(2'-deoxyribose 5'-phosphate)-2'-deoxyribonucleotide-DNA = a 3'-end 2'-deoxyribonucleotide-(2,3-dehydro-2,3-deoxyribose 5'-phosphate)-DNA + a 5'-end 5'-phospho-2'-deoxyribonucleoside-DNA + H(+). Involved in base excision repair of DNA damaged by oxidation or by mutagenic agents. Acts as a DNA glycosylase that recognizes and removes damaged bases. Has a preference for oxidized purines, such as 7,8-dihydro-8-oxoguanine (8-oxoG). Has AP (apurinic/apyrimidinic) lyase activity and introduces nicks in the DNA strand. Cleaves the DNA backbone by beta-delta elimination to generate a single-strand break at the site of the removed base with both 3'- and 5'-phosphates. This chain is Formamidopyrimidine-DNA glycosylase, found in Prochlorococcus marinus (strain NATL1A).